A 74-amino-acid chain; its full sequence is Guanine nucleotide-binding protein G(T) subunit gamma-T1 (74 aa).

Residue Cys71 is modified to Cysteine methyl ester. A lipid anchor (S-farnesyl cysteine) is attached at Cys71. Residues 72-74 (VIS) constitute a propeptide, removed in mature form.

This sequence belongs to the G protein gamma family. As to quaternary structure, g proteins are composed of 3 units, alpha, beta and gamma. In terms of tissue distribution, retinal rod outer segment.

It is found in the cell membrane. Guanine nucleotide-binding proteins (G proteins) are involved as a modulator or transducer in various transmembrane signaling systems. The beta and gamma chains are required for the GTPase activity, for replacement of GDP by GTP, and for G protein-effector interaction. The sequence is that of Guanine nucleotide-binding protein G(T) subunit gamma-T1 (GNGT1) from Canis lupus familiaris (Dog).